The following is a 481-amino-acid chain: Glutamyl-tRNA(Gln) amidotransferase subunit A (481 aa).

Catalysis depends on charge relay system residues K76 and S151. S175 (acyl-ester intermediate) is an active-site residue.

It belongs to the amidase family. GatA subfamily. Heterotrimer of A, B and C subunits.

It carries out the reaction L-glutamyl-tRNA(Gln) + L-glutamine + ATP + H2O = L-glutaminyl-tRNA(Gln) + L-glutamate + ADP + phosphate + H(+). Its function is as follows. Allows the formation of correctly charged Gln-tRNA(Gln) through the transamidation of misacylated Glu-tRNA(Gln) in organisms which lack glutaminyl-tRNA synthetase. The reaction takes place in the presence of glutamine and ATP through an activated gamma-phospho-Glu-tRNA(Gln). The chain is Glutamyl-tRNA(Gln) amidotransferase subunit A from Chlorobaculum parvum (strain DSM 263 / NCIMB 8327) (Chlorobium vibrioforme subsp. thiosulfatophilum).